Reading from the N-terminus, the 725-residue chain is Sodium/hydrogen exchanger 7 (725 aa).

Residues 1–20 (MEPGDAARPGSGRATGAPPP) are disordered. Topologically, residues 1-21 (MEPGDAARPGSGRATGAPPPR) are cytoplasmic. Residues 22–42 (LLLLPLLLGWGLRVAAAASAS) form a helical membrane-spanning segment. The Lumenal portion of the chain corresponds to 43–70 (SSGAAAEDSSAMEELATEKEAEESHRQD). The helical transmembrane segment at 71–91 (SVSLLTFILLLTLTILTIWLF) threads the bilayer. The Cytoplasmic segment spans residues 92–95 (KHRR). Residues 96 to 116 (VRFLHETGLAMIYGLIVGVIL) form a helical membrane-spanning segment. Residues 117–175 (RYGTPATSGRDKSLSCTQEDRAFSTLLVNVSGKFFEYTLKGEISPGKINSVEQNDMLRK) are Lumenal-facing. A glycan (N-linked (GlcNAc...) asparagine) is linked at Asn-145. Residues 176–196 (VTFDPEVFFNILLPPIIFHAG) form a helical membrane-spanning segment. Residues 197-210 (YSLKKRHFFRNLGS) are Cytoplasmic-facing. Residues 211–231 (ILAYAFLGTAVSCFIIGNLMY) traverse the membrane as a helical segment. The Lumenal portion of the chain corresponds to 232 to 251 (GVVKLMKIMGQLSDKFYYTD). The helical transmembrane segment at 252 to 272 (CLFFGAIISATDPVTVLAIFN) threads the bilayer. At 273–277 (ELHAD) the chain is on the cytoplasmic side. A helical transmembrane segment spans residues 278-298 (VDLYALLFGESVLNDAVAIVL). The Lumenal portion of the chain corresponds to 299 to 322 (SSSIVAYQPAGLNTHAFDAAAFFK). Residues 323-343 (SVGIFLGIFSGSFTMGAVTGV) traverse the membrane as a helical segment. At 344-349 (NANVTK) the chain is on the cytoplasmic side. 2 helical membrane-spanning segments follow: residues 350–370 (FTKL…MSWS) and 371–391 (TFLL…FCGI). Over 392–414 (TQAHYTYNNLSVESRSRTKQLFE) the chain is Cytoplasmic. The chain crosses the membrane as a helical span at residues 415–435 (VLHFLAENFIFSYMGLALFTF). Residues 436-442 (QKHVFSP) lie on the Lumenal side of the membrane. Residues 443–463 (IFIIGAFVAIFLGRAAHIYPL) traverse the membrane as a helical segment. At 464 to 474 (SFFLNLGRRHK) the chain is on the cytoplasmic side. The helical transmembrane segment at 475–497 (IGWNFQHMMMFSGLRGAMAFALA) threads the bilayer. The Lumenal portion of the chain corresponds to 498–513 (IRDTASYARQMMFTTT). Residues 514–534 (LLIVFFTVWIIGGGTTPMLSW) traverse the membrane as a helical segment. 2 required for trans-Golgi network localization regions span residues 533–559 (SWLN…YFRV) and 563–568 (PDQDPP). Residues 535-725 (LNIRVGVEEP…RLVFPLEDNA (191 aa)) lie on the Cytoplasmic side of the membrane. Ser-545 carries the post-translational modification Phosphoserine. Disordered stretches follow at residues 567–590 (PPPN…GNRT) and 669–714 (TVTA…SSRG). Over residues 675-684 (SSSSHTASTS) the composition is skewed to low complexity. Residues 687–704 (GSRRTKSSSEEVLERDLG) show a composition bias toward basic and acidic residues.

Belongs to the monovalent cation:proton antiporter 1 (CPA1) transporter (TC 2.A.36) family. As to quaternary structure, interacts with SCAMP1, SCAMP2 and SCAMP5; may participate in its shuttling from trans-Golgi network to recycling endosomes. In terms of processing, N-glycosylated. As to expression, ubiquitously expressed.

The protein resides in the golgi apparatus. Its subcellular location is the trans-Golgi network membrane. The protein localises to the recycling endosome membrane. It localises to the cell membrane. It catalyses the reaction Na(+)(in) + H(+)(out) = Na(+)(out) + H(+)(in). It carries out the reaction K(+)(in) + H(+)(out) = K(+)(out) + H(+)(in). Its activity is regulated as follows. Inhibited by benzamil and quinine but not by amiloride. In terms of biological role, golgi Na(+), K(+)/(H+) antiporter. Mediates the electoneutral influx of Na(+) or K(+) in exchange for H(+). May contribute to the regulation of Golgi apparatus volume and pH. The chain is Sodium/hydrogen exchanger 7 (SLC9A7) from Homo sapiens (Human).